Consider the following 145-residue polypeptide: MNASNPCRRFPRSARVRTRAQYTIVFDTARRTSDPLLSLHWRTGDTPPRLGMAVSRKVDTRAVGRNRIKRVLRDAMRHLLPELAGGDYVIVARSAAAKATNPQIRDAFLRLLHRAGALPLPAAAGTMPPARTVHPSSLSPTEPEL.

The interval 121 to 145 (PAAAGTMPPARTVHPSSLSPTEPEL) is disordered. Residues 134-145 (HPSSLSPTEPEL) are compositionally biased toward polar residues.

The protein belongs to the RnpA family. Consists of a catalytic RNA component (M1 or rnpB) and a protein subunit.

It carries out the reaction Endonucleolytic cleavage of RNA, removing 5'-extranucleotides from tRNA precursor.. In terms of biological role, RNaseP catalyzes the removal of the 5'-leader sequence from pre-tRNA to produce the mature 5'-terminus. It can also cleave other RNA substrates such as 4.5S RNA. The protein component plays an auxiliary but essential role in vivo by binding to the 5'-leader sequence and broadening the substrate specificity of the ribozyme. This is Ribonuclease P protein component from Xanthomonas axonopodis pv. citri (strain 306).